A 200-amino-acid chain; its full sequence is Glycerol-3-phosphate acyltransferase (200 aa).

A run of 6 helical transmembrane segments spans residues 9 to 29 (IIIG…AYFW), 54 to 74 (VPGM…VLLA), 81 to 101 (DIAV…PLWL), 112 to 132 (GAGA…LVWL), 140 to 160 (YVSL…ALLN), and 165 to 185 (YLIF…SNIG).

Belongs to the PlsY family. In terms of assembly, probably interacts with PlsX.

It localises to the cell membrane. It catalyses the reaction an acyl phosphate + sn-glycerol 3-phosphate = a 1-acyl-sn-glycero-3-phosphate + phosphate. The protein operates within lipid metabolism; phospholipid metabolism. Its function is as follows. Catalyzes the transfer of an acyl group from acyl-phosphate (acyl-PO(4)) to glycerol-3-phosphate (G3P) to form lysophosphatidic acid (LPA). This enzyme utilizes acyl-phosphate as fatty acyl donor, but not acyl-CoA or acyl-ACP. This is Glycerol-3-phosphate acyltransferase from Desulforamulus reducens (strain ATCC BAA-1160 / DSM 100696 / MI-1) (Desulfotomaculum reducens).